The chain runs to 472 residues: Phosphoglucosamine mutase (472 aa).

The active-site Phosphoserine intermediate is Ser123. 4 residues coordinate Mg(2+): Ser123, Asp262, Asp264, and Asp266. Ser123 is subject to Phosphoserine.

The protein belongs to the phosphohexose mutase family. It depends on Mg(2+) as a cofactor. In terms of processing, activated by phosphorylation.

The catalysed reaction is alpha-D-glucosamine 1-phosphate = D-glucosamine 6-phosphate. In terms of biological role, catalyzes the conversion of glucosamine-6-phosphate to glucosamine-1-phosphate. This Synechococcus elongatus (strain ATCC 33912 / PCC 7942 / FACHB-805) (Anacystis nidulans R2) protein is Phosphoglucosamine mutase.